The sequence spans 296 residues: MPELPEVETVRRGLQPVLEGARLTRVEARRPDLRFPFPERFSERLTGKTITALGRRAKYLTMHVQDGPVLICHLGMSGSFRIETDDDGETPGVFHHERSKSTAHDHVVFDVVAADGARSRVIFNDPRRFGFMLFAEGSPETHPMLAGLGVEPTGNTLDGVLLASLLKGRGSPLKAALLDQKLIAGLGNIYVSEALWRAGLSPLREAGTIARPSKKARQQSERLAEAIRSVISDAIAAGGSSLRDYMHTDGSLGYFQHSFAVYDREGEPCPKPGCGGHIERVVQSGRSTFYCRTCQS.

The active-site Schiff-base intermediate with DNA is the Pro-2. Glu-3 serves as the catalytic Proton donor. Lys-58 serves as the catalytic Proton donor; for beta-elimination activity. 3 residues coordinate DNA: His-104, Arg-127, and Arg-169. Residues 260–296 form an FPG-type zinc finger; it reads AVYDREGEPCPKPGCGGHIERVVQSGRSTFYCRTCQS. Arg-286 acts as the Proton donor; for delta-elimination activity in catalysis.

It belongs to the FPG family. In terms of assembly, monomer. It depends on Zn(2+) as a cofactor.

The catalysed reaction is Hydrolysis of DNA containing ring-opened 7-methylguanine residues, releasing 2,6-diamino-4-hydroxy-5-(N-methyl)formamidopyrimidine.. It catalyses the reaction 2'-deoxyribonucleotide-(2'-deoxyribose 5'-phosphate)-2'-deoxyribonucleotide-DNA = a 3'-end 2'-deoxyribonucleotide-(2,3-dehydro-2,3-deoxyribose 5'-phosphate)-DNA + a 5'-end 5'-phospho-2'-deoxyribonucleoside-DNA + H(+). Functionally, involved in base excision repair of DNA damaged by oxidation or by mutagenic agents. Acts as a DNA glycosylase that recognizes and removes damaged bases. Has a preference for oxidized purines, such as 7,8-dihydro-8-oxoguanine (8-oxoG). Has AP (apurinic/apyrimidinic) lyase activity and introduces nicks in the DNA strand. Cleaves the DNA backbone by beta-delta elimination to generate a single-strand break at the site of the removed base with both 3'- and 5'-phosphates. This is Formamidopyrimidine-DNA glycosylase (mutM) from Mesorhizobium japonicum (strain LMG 29417 / CECT 9101 / MAFF 303099) (Mesorhizobium loti (strain MAFF 303099)).